Reading from the N-terminus, the 449-residue chain is RNA binding protein fox-1 homolog 2 (449 aa).

Residues 1 to 21 show a composition bias toward low complexity; that stretch reads MAEGGQAQQQPPQLGPGAAAR. Residues 1 to 186 are disordered; that stretch reads MAEGGQAQQQ…STPKRLHVSN (186 aa). Polar residues-rich tracts occupy residues 77-86 and 118-138; these read QGNQEPTTTP and YAGQ…PHGE. Positions 139–176 are enriched in low complexity; the sequence is QSSNSPSNQNGSLTQTEGGAQTDGQQSQTQSSENSESK. The region spanning 180 to 256 is the RRM domain; the sequence is KRLHVSNIPF…RKIEVNNATA (77 aa). Omega-N-methylarginine is present on residues Arg236, Gly241, Tyr268, and Lys273. Asymmetric dimethylarginine occurs at positions 285 and 317. Leu318, Leu323, Ala336, Arg340, and Gly341 each carry omega-N-methylarginine. An asymmetric dimethylarginine mark is found at Arg356 and Arg388. Asymmetric dimethylarginine; alternate is present on residues Arg440 and Arg445. Arg440 and Arg445 each carry omega-N-methylarginine; alternate.

As to quaternary structure, interacts with ER-alpha N-terminal activation domain. Interacts with RBPMS; the interaction allows cooperative assembly of stable cell-specific alternative splicing regulatory complexes. As to expression, detected in brain neurons (at protein level). Detected in heart, brain, embryo, lung, liver, kidney and ovary.

The protein resides in the nucleus. It is found in the cytoplasm. Its function is as follows. RNA-binding protein that regulates alternative splicing events by binding to 5'-UGCAUGU-3' elements. Prevents binding of U2AF2 to the 3'-splice site. Regulates alternative splicing of tissue-specific exons and of differentially spliced exons during erythropoiesis. Seems to act as a coregulatory factor of ER-alpha. Together with RNA binding proteins RBPMS and MBNL1/2, activates vascular smooth muscle cells alternative splicing events. The polypeptide is RNA binding protein fox-1 homolog 2 (Rbfox2) (Mus musculus (Mouse)).